Consider the following 124-residue polypeptide: Small ribosomal subunit protein uS12 (124 aa).

Positions 1 to 30 (MPTIQQLVRKGRRDKVAKVKTAALKGSPQR) are disordered. Aspartate 89 carries the 3-methylthioaspartic acid modification. The tract at residues 105–124 (QGVKNRKQARSRYGAKKEKS) is disordered. Residues 108–118 (KNRKQARSRYG) show a composition bias toward basic residues.

This sequence belongs to the universal ribosomal protein uS12 family. Part of the 30S ribosomal subunit. Contacts proteins S8 and S17. May interact with IF1 in the 30S initiation complex.

Its function is as follows. With S4 and S5 plays an important role in translational accuracy. Functionally, interacts with and stabilizes bases of the 16S rRNA that are involved in tRNA selection in the A site and with the mRNA backbone. Located at the interface of the 30S and 50S subunits, it traverses the body of the 30S subunit contacting proteins on the other side and probably holding the rRNA structure together. The combined cluster of proteins S8, S12 and S17 appears to hold together the shoulder and platform of the 30S subunit. The chain is Small ribosomal subunit protein uS12 from Mycobacterium intracellulare.